The sequence spans 183 residues: UPF0725 protein At4g11700 (183 aa).

This sequence belongs to the UPF0725 (EMB2204) family.

This chain is UPF0725 protein At4g11700, found in Arabidopsis thaliana (Mouse-ear cress).